A 714-amino-acid polypeptide reads, in one-letter code: MYRALYAFRSAEPNAMAFAAGETFLVLERSSTHWWLAARARSGETGYVPPAYLHRLQGMEQDVLQAIDRAIEAVHNTAMRDGGKYSLEQRGVLQKLIHHRKETLSRRGTSASSATVMTPSTSDHHLDAAVSRQPNGVCRTGFERQHSLPSSEHLGTDGALYQVPPQPRRAAPTTPPPPVKRRDREALVISGSGGRTAIPSGGSSVSSGSSASSTSMDTLYTGSSPSELGPSCSPTPPPVPRRGAHTTVSQPQPSPSKAPSPEPPTEEVAAETNSTPDDLEAQDALSPETTEEKAAAETVVPRTIGAELMELVRRNTGLSHELCRVAIGVVVGHIQATVPASSPIMEQVLLSLVEGKDLSTALPSGQVCHDQQRLEVIFADLARRKDDAQQRSWALYEDEDVIRCYLEELLHILTDADPEVCKKMCKRSDFESVLALVAYYQMEHRASLRLLLLKCFGAMCSLDAAIISTLVSSVLPVELARDMQTDTQDHQKLCYSALVLAMVFSMGEAVPYAHYEHLGTPFAQFLLSIVEDGLPMDTTEQLPDLCMNLLLALNLHLTAPEQNVIMAALSRHTNVKIFSEKLLLLLNRGDDPVRIFRHEPQPPHSVLKFLQDVFSSSATAAIFYHTDMMALIDITVRQIADLSPGDKLRMEYLSLMHAVVRSTPYLQHRHRLSDLQATLRRILTEEEASPQCQMDRMIVQEMYKEFPDLGEVPS.

The SH3 domain occupies 1 to 58; that stretch reads MYRALYAFRSAEPNAMAFAAGETFLVLERSSTHWWLAARARSGETGYVPPAYLHRLQG. 2 disordered regions span residues 103-126 and 139-298; these read TLSRRGTSASSATVMTPSTSDHHL and RTGF…AAET. Over residues 106 to 121 the composition is skewed to polar residues; the sequence is RRGTSASSATVMTPST. Serine 120 carries the phosphoserine modification. A Nuclear localization signal motif is present at residues 168 to 185; the sequence is RRAAPTTPPPPVKRRDRE. Threonine 174 is modified (phosphothreonine). Positions 200–215 are enriched in low complexity; the sequence is SGGSSVSSGSSASSTS. The segment covering 216–226 has biased composition (polar residues); that stretch reads MDTLYTGSSPS. Residues 252 to 263 are compositionally biased toward pro residues; the sequence is QPSPSKAPSPEP. A phosphoserine mark is found at serine 260, serine 286, and serine 673.

Associates with the intermediate filaments, vimentin and desmin. Binds the first and third SH3 domains of NCK. Binds the proline-rich domains of N-WASP through its SH3 domain. Similarly, binds diaphanous protein homolog 1 (DRF1). Binds the SH3 domains of GRB2 through its proline-rich domains. Interacts with FASLG.

Its subcellular location is the nucleus. In terms of biological role, has an important role in stress fiber formation induced by active diaphanous protein homolog 1 (DRF1). Induces microspike formation, in vivo. In vitro, stimulates N-WASP-induced ARP2/3 complex activation in the absence of CDC42. May play an important role in the maintenance of sarcomere and/or in the assembly of myofibrils into sarcomeres. Implicated in regulation of actin polymerization and cell adhesion. In Mus musculus (Mouse), this protein is NCK-interacting protein with SH3 domain (Nckipsd).